We begin with the raw amino-acid sequence, 242 residues long: Myogenic factor 6 (242 aa).

Positions 31 to 63 (SPLYPGSDGTLSPCQDQMPPEAGSDSSGEEHVL) are disordered. The 52-residue stretch at 93–144 (DRRKAATLRERRRLKKINEAFEALKRRTVANPNQRLPKVEILRSAINYIERL) folds into the bHLH domain.

As to quaternary structure, efficient DNA binding requires dimerization with another bHLH protein.

It is found in the nucleus. Functionally, involved in muscle differentiation (myogenic factor). Induces fibroblasts to differentiate into myoblasts. Probable sequence specific DNA-binding protein. This is Myogenic factor 6 (MYF6) from Sus scrofa (Pig).